Consider the following 1020-residue polypeptide: Mediator of RNA polymerase II transcription subunit 16 (1020 aa).

It belongs to the Mediator complex subunit 16 family. Component of the Mediator complex.

The protein localises to the nucleus. Its function is as follows. Component of the Mediator complex, a coactivator involved in the regulated transcription of nearly all RNA polymerase II-dependent genes. Mediator functions as a bridge to convey information from gene-specific regulatory proteins to the basal RNA polymerase II transcription machinery. Mediator is recruited to promoters by direct interactions with regulatory proteins and serves as a scaffold for the assembly of a functional preinitiation complex with RNA polymerase II and the general transcription factors. In Scheffersomyces stipitis (strain ATCC 58785 / CBS 6054 / NBRC 10063 / NRRL Y-11545) (Yeast), this protein is Mediator of RNA polymerase II transcription subunit 16 (SIN4).